We begin with the raw amino-acid sequence, 214 residues long: Adenylate kinase (214 aa).

ATP is bound at residue 10–15; it reads GAGKGT. The NMP stretch occupies residues 30–59; it reads STGDMLRAAVKAGSELGLKAKEIMDAGKLV. AMP contacts are provided by residues Thr31, Arg36, 57–59, 85–88, and Gln92; these read KLV and GFPR. The interval 122–159 is LID; it reads GRRVHAPSGRVYHVTFNPPRVEGKDDMTGEELTTRKDD. ATP contacts are provided by residues Arg123 and 132–133; that span reads VY. Positions 156 and 167 each coordinate AMP. ATP is bound at residue Arg200.

Belongs to the adenylate kinase family. As to quaternary structure, monomer.

It localises to the cytoplasm. The catalysed reaction is AMP + ATP = 2 ADP. The protein operates within purine metabolism; AMP biosynthesis via salvage pathway; AMP from ADP: step 1/1. Functionally, catalyzes the reversible transfer of the terminal phosphate group between ATP and AMP. Plays an important role in cellular energy homeostasis and in adenine nucleotide metabolism. This Erwinia tasmaniensis (strain DSM 17950 / CFBP 7177 / CIP 109463 / NCPPB 4357 / Et1/99) protein is Adenylate kinase.